The sequence spans 217 residues: Peptide methionine sulfoxide reductase MsrA (217 aa).

Cysteine 54 is a catalytic residue.

This sequence belongs to the MsrA Met sulfoxide reductase family.

It carries out the reaction L-methionyl-[protein] + [thioredoxin]-disulfide + H2O = L-methionyl-(S)-S-oxide-[protein] + [thioredoxin]-dithiol. It catalyses the reaction [thioredoxin]-disulfide + L-methionine + H2O = L-methionine (S)-S-oxide + [thioredoxin]-dithiol. In terms of biological role, has an important function as a repair enzyme for proteins that have been inactivated by oxidation. Catalyzes the reversible oxidation-reduction of methionine sulfoxide in proteins to methionine. The sequence is that of Peptide methionine sulfoxide reductase MsrA from Maricaulis maris (strain MCS10) (Caulobacter maris).